Reading from the N-terminus, the 141-residue chain is MLTAEDKKLIQQAWEKAASHQEEFGAEALTRMFTTYPQTKTYFPHFDLSPGSDQVRGHGKKVLGALGNAVKNVDNLSQAMSELSNLHAYNLRVDPVNFKLLSQCIQVVLAAHLGKDYTPEVHAAFDKFLSAVSAVLAEKYR.

A Globin domain is found at 1–141 (MLTAEDKKLI…VSAVLAEKYR (141 aa)). The heme b site is built by H58 and H87.

This sequence belongs to the globin family. Heterotetramer of two alpha-D chains and two beta chains. In terms of tissue distribution, red blood cells.

Its function is as follows. Involved in oxygen transport from the lung to the various peripheral tissues. This is Hemoglobin subunit alpha-D (HBAD) from Meleagris gallopavo (Wild turkey).